A 714-amino-acid chain; its full sequence is RanBP-type and C3HC4-type zinc finger-containing protein 1 (714 aa).

Disordered regions lie at residues 1-23 (MSLS…SHLG) and 152-172 (SSST…SKAP). Positions 14 to 23 (PAQSSSSHLG) are enriched in polar residues. Positions 225–301 (LAVVVEDASS…TAFLYLISAR (77 aa)) constitute a Ubiquitin-like domain. The RanBP2-type zinc finger occupies 394–426 (RTSIQPGWACPTCTYINKPTRPGCEMCSADRPE). Residues 482 to 710 (ERVECRICYV…VNKQRCHPKC (229 aa)) are TRIAD supradomain. Zn(2+) is bound by residues C486, C489, C504, H506, C509, C512, C527, C536, C575, C580, C595, C598, C603, C606, H610, C615, C651, and C654. An RING-type 1 zinc finger spans residues 486 to 536 (CRICYVELESGEGVLLRECLHCFCKECLRSVILMSEDPQVACPYRDESYAC). The IBR-type zinc-finger motif lies at 555–615 (QHWLQRGLSV…CKAIHEGMNC (61 aa)). The segment at 651–680 (CPQCGIIVQKKEGCDWLRCTVCHTEICWVT) adopts an RING-type 2; atypical zinc-finger fold. C664 is an active-site residue. 2 residues coordinate Zn(2+): C669 and C672.

The protein belongs to the RBR family. Component of the LUBAC complex (linear ubiquitin chain assembly complex).

It catalyses the reaction [E2 ubiquitin-conjugating enzyme]-S-ubiquitinyl-L-cysteine + [acceptor protein]-L-lysine = [E2 ubiquitin-conjugating enzyme]-L-cysteine + [acceptor protein]-N(6)-ubiquitinyl-L-lysine.. The protein operates within protein modification; protein ubiquitination. Functionally, component of the LUBAC complex which conjugates linear ('Met-1'-linked) polyubiquitin chains to substrates and plays a key role in NF-kappa-B activation and regulation of inflammation. LUBAC conjugates linear polyubiquitin to ikbkg and RIPK1 and is involved in activation of the canonical NF-kappa-B and the JNK signaling pathways. Linear ubiquitination mediated by the LUBAC complex interferes with TNF-induced cell death and thereby prevents inflammation. LUBAC is recruited to the TNF-R1 signaling complex (TNF-RSC) to conjugate linear polyubiquitin to ikbkg and possibly other components contributing to the stability of the complex. The LUBAC complex is also involved in innate immunity by conjugating linear polyubiquitin chains at the surface of bacteria invading the cytosol to form the ubiquitin coat surrounding bacteria. LUBAC is not able to initiate formation of the bacterial ubiquitin coat, and can only promote formation of linear polyubiquitins on pre-existing ubiquitin. The bacterial ubiquitin coat acts as an 'eat-me' signal for xenophagy and promotes NF-kappa-B activation. Binds polyubiquitin of different linkage types. The protein is RanBP-type and C3HC4-type zinc finger-containing protein 1 (rbck1) of Danio rerio (Zebrafish).